Reading from the N-terminus, the 443-residue chain is Tryptophan synthase beta chain 2, chloroplastic (443 aa).

Residues 1 to 32 (PGPPPPAPEGRRRRGRGRNAAGQAVAAEASPA) form a disordered region. The N-terminal 45 residues, 1–45 (PGPPPPAPEGRRRRGRGRNAAGQAVAAEASPAAVEMGNGAAAPGL), are a transit peptide targeting the chloroplast. Residues 18 to 32 (RNAAGQAVAAEASPA) are compositionally biased toward low complexity. Lys138 carries the post-translational modification N6-(pyridoxal phosphate)lysine.

The protein belongs to the TrpB family. As to quaternary structure, tetramer of two alpha and two beta chains. Pyridoxal 5'-phosphate serves as cofactor.

It is found in the plastid. The protein resides in the chloroplast. It carries out the reaction (1S,2R)-1-C-(indol-3-yl)glycerol 3-phosphate + L-serine = D-glyceraldehyde 3-phosphate + L-tryptophan + H2O. It functions in the pathway amino-acid biosynthesis; L-tryptophan biosynthesis; L-tryptophan from chorismate: step 5/5. In terms of biological role, the beta subunit is responsible for the synthesis of L-tryptophan from indole and L-serine. In Zea mays (Maize), this protein is Tryptophan synthase beta chain 2, chloroplastic (TSB2).